Here is a 527-residue protein sequence, read N- to C-terminus: Tyrosine--tRNA ligase, cytoplasmic (527 aa).

Tyrosine 39 provides a ligand contact to L-tyrosine. The 'HIGH' region motif lies at 44–52 (TTGKPHVAY). Positions 166, 170, 173, and 188 each coordinate L-tyrosine. Residues 222 to 226 (KMSSS) carry the 'KMSKS' region motif. Positions 242-247 (KKKLKK) match the Nuclear localization signal motif. The tract at residues 337–362 (TNAAYPNPSKAKPAEKGTKNSEPETI) is disordered. Positions 348 to 358 (KPAEKGTKNSE) are enriched in basic and acidic residues. Residues 363 to 467 (VPSRLDIRVG…AECCAGERVY (105 aa)) form the tRNA-binding domain.

The protein belongs to the class-I aminoacyl-tRNA synthetase family. As to quaternary structure, homodimer.

It is found in the cytoplasm. Its subcellular location is the nucleus. The enzyme catalyses tRNA(Tyr) + L-tyrosine + ATP = L-tyrosyl-tRNA(Tyr) + AMP + diphosphate + H(+). Catalyzes the attachment of tyrosine to tRNA(Tyr) in a two-step reaction: tyrosine is first activated by ATP to form Tyr-AMP and then transferred to the acceptor end of tRNA(Tyr). The protein is Tyrosine--tRNA ligase, cytoplasmic (YARS1) of Gallus gallus (Chicken).